An 807-amino-acid polypeptide reads, in one-letter code: Glycerol-3-phosphate acyltransferase (807 aa).

An HXXXXD motif motif is present at residues 308–313 (CHRSHM).

It belongs to the GPAT/DAPAT family.

The protein resides in the cell inner membrane. It catalyses the reaction sn-glycerol 3-phosphate + an acyl-CoA = a 1-acyl-sn-glycero-3-phosphate + CoA. Its pathway is phospholipid metabolism; CDP-diacylglycerol biosynthesis; CDP-diacylglycerol from sn-glycerol 3-phosphate: step 1/3. This is Glycerol-3-phosphate acyltransferase from Shewanella amazonensis (strain ATCC BAA-1098 / SB2B).